The following is a 61-amino-acid chain: Metallothionein-1A (61 aa).

Position 1 is an N-acetylmethionine (Met1). Residues 1–29 (MDPNCSCPTGGSCSCAGSCTCKACRCTSC) form a beta region. A divalent metal cation-binding residues include Cys5, Cys7, Cys13, Cys15, Cys19, Cys21, Cys24, Cys26, Cys29, Cys33, Cys34, Cys36, Cys37, Cys41, Cys44, Cys48, Cys50, and Cys57. The tract at residues 30–61 (KKSCCSCCPAGCARCAQGCICKGASDKCSCCA) is alpha. The residue at position 58 (Ser58) is a Phosphoserine. A divalent metal cation is bound by residues Cys59 and Cys60.

Belongs to the metallothionein superfamily. Type 1 family. In terms of assembly, monomer.

In terms of biological role, metallothioneins have a high content of cysteine residues that bind various heavy metals; these proteins are transcriptionally regulated by both heavy metals and glucocorticoids. The chain is Metallothionein-1A (MT1A) from Sus scrofa (Pig).